The primary structure comprises 64 residues: Conotoxin Im11.2 (64 aa).

Positions 1–26 are cleaved as a signal peptide; that stretch reads MMFRLTSVSCFLLVIVCLNLVVLTNA. 4 disulfide bridges follow: C27/C41, C34/C46, C40/C50, and C45/C54. The residue at position 57 (D57) is an Aspartic acid 1-amide. The propeptide occupies 61–64; that stretch reads ATFQ.

It belongs to the conotoxin I2 superfamily. Expressed by the venom duct.

The protein resides in the secreted. This chain is Conotoxin Im11.2, found in Conus imperialis (Imperial cone).